The chain runs to 927 residues: Translation initiation factor IF-2 (927 aa).

The disordered stretch occupies residues 27–338 (LGLPVKSHAS…APKPVTERKF (312 aa)). Over residues 49 to 69 (SFSSSKTKAPTNSVQTNQGVK) the composition is skewed to polar residues. Basic and acidic residues-rich tracts occupy residues 70-86 (TESK…DDKP) and 101-138 (FKAE…DRRH). Positions 146–159 (GNRNDNRQGQQNNR) are enriched in low complexity. Basic and acidic residues-rich tracts occupy residues 160-171 (NKNDGRYADHKQ), 202-226 (YSRH…EQEL), and 234-257 (AQEE…KEIV). The span at 300-316 (NWNNQNQVRNQRNSNWN) shows a compositional bias: low complexity. The tr-type G domain maps to 428-597 (ERPPVVTIMG…LLVAEMEELK (170 aa)). Residues 437–444 (GHVDHGKT) are G1. Residue 437-444 (GHVDHGKT) coordinates GTP. Residues 462–466 (GITQH) form a G2 region. The interval 483-486 (DTPG) is G3. Residues 483-487 (DTPGH) and 537-540 (NKID) contribute to the GTP site. The segment at 537–540 (NKID) is G4. Positions 573–575 (SAK) are G5.

Belongs to the TRAFAC class translation factor GTPase superfamily. Classic translation factor GTPase family. IF-2 subfamily.

It localises to the cytoplasm. Its function is as follows. One of the essential components for the initiation of protein synthesis. Protects formylmethionyl-tRNA from spontaneous hydrolysis and promotes its binding to the 30S ribosomal subunits. Also involved in the hydrolysis of GTP during the formation of the 70S ribosomal complex. The sequence is that of Translation initiation factor IF-2 from Streptococcus agalactiae serotype Ia (strain ATCC 27591 / A909 / CDC SS700).